Here is a 146-residue protein sequence, read N- to C-terminus: Zinc metalloproteinase-disintegrin salmosin-3 (146 aa).

One can recognise a Peptidase M12B domain in the interval 1-57 (SCPCDANSCIMSATLSNEPSSRFSDCSFSLPSRFSDCSFNQYSSDIIHYHECLLNEP). Intrachain disulfides connect cysteine 2-cysteine 37, cysteine 4-cysteine 9, cysteine 68-cysteine 87, cysteine 79-cysteine 97, cysteine 81-cysteine 92, cysteine 91-cysteine 114, cysteine 105-cysteine 111, cysteine 110-cysteine 135, and cysteine 123-cysteine 142. The 82-residue stretch at 65-146 (PPVCGNYYPE…GQSGVCPRNT (82 aa)) folds into the Disintegrin domain. Positions 127 to 129 (RGD) match the Cell attachment site motif.

Belongs to the venom metalloproteinase (M12B) family. P-II subfamily. P-IIb sub-subfamily. As to quaternary structure, monomer (disintegrin). It depends on Zn(2+) as a cofactor. In terms of tissue distribution, expressed by the venom gland.

It localises to the secreted. Snake venom zinc metalloproteinase that inhibits ADP-induced platelet aggregation (probably by binding integrin alpha-IIb/beta-3 (ITGA2B/ITGB3)) and degrades fibrinogen. The sequence is that of Zinc metalloproteinase-disintegrin salmosin-3 from Gloydius brevicauda (Korean slamosa snake).